Reading from the N-terminus, the 306-residue chain is MFPQCKFSREFLHPRYWLTWFGLGVLWLWVQLPYPVLCFLGTRIGAMARPFLKRRESIARKNLELCFPQHSAEEREKMIAENFRSLGMALVETGMAWFWPDSRVRKWFDVEGLDNLKRAQMQNRGVMVVGVHFMSLELGGRVMGLCQPMMATYRPHNNQLMEWVQTRGRMRSNKAMIGRNNLRGIVGALKKGEAVWFAPDQDYGRKGSSFAPFFAVENVATTNGTYVLSRLSGAAMLTVTMVRKADYSGYRLFITPEMEGYPTDENQAAAYMNKIIEKEIMRAPEQYLWIHRRFKTRPVGESSLYI.

Residues 20–40 form a helical membrane-spanning segment; sequence WFGLGVLWLWVQLPYPVLCFL. Positions 132 to 137 match the HXXXXD motif motif; sequence HFMSLE.

This sequence belongs to the LpxL/LpxM/LpxP family. LpxP subfamily.

The protein localises to the cell inner membrane. The catalysed reaction is (9Z)-hexadecenoyl-[ACP] + alpha-Kdo-(2-&gt;4)-alpha-Kdo-(2-&gt;6)-lipid IVA (E. coli) = (9Z)-hexadecenoyl-(Kdo)2-lipid IVA (E. coli) + holo-[ACP]. It functions in the pathway bacterial outer membrane biogenesis; lipopolysaccharide biosynthesis. Catalyzes the transfer of palmitoleate from palmitoleoyl-[acyl-carrier-protein] (ACP) to Kdo(2)-lipid IV(A) to form Kdo(2)-(palmitoleoyl)-lipid IV(A). Required for the biosynthesis of a distinct molecular species of lipid A, which is present only in cells grown at low temperatures. It may confer a selective advantage to cells growing at lower temperatures by making the outer membrane a more effective barrier to harmful chemicals. This is Lipid A biosynthesis palmitoleoyltransferase from Escherichia coli (strain K12).